The chain runs to 363 residues: Ethanol acetyltransferase 1 (363 aa).

Residues Met-1–Tyr-19 constitute a mitochondrion transit peptide. One can recognise an AB hydrolase-1 domain in the interval Pro-65–Ser-164. Catalysis depends on charge relay system residues Ser-138, Asp-162, and His-313.

Belongs to the AB hydrolase superfamily.

It localises to the mitochondrion. The catalysed reaction is ethanol + acetyl-CoA = ethyl acetate + CoA. It carries out the reaction acetyl-CoA + H2O = acetate + CoA + H(+). It catalyses the reaction ethyl acetate + H2O = ethanol + acetate + H(+). Its function is as follows. Alcohol acetyltransferase that catalyzes the synthesis of ethyl acetate from ethanol and acetyl-CoA. Can also function as a thioesterase by hydrolyzing acetyl-CoA in the absence of ethanol, as well as esterase hydrolyzing ethyl acetate. This is Ethanol acetyltransferase 1 (EAT1) from Kluyveromyces marxianus (strain DMKU3-1042 / BCC 29191 / NBRC 104275) (Yeast).